The sequence spans 134 residues: ATP synthase epsilon chain (134 aa).

It belongs to the ATPase epsilon chain family. In terms of assembly, F-type ATPases have 2 components, CF(1) - the catalytic core - and CF(0) - the membrane proton channel. CF(1) has five subunits: alpha(3), beta(3), gamma(1), delta(1), epsilon(1). CF(0) has three main subunits: a, b and c.

It is found in the cellular thylakoid membrane. Produces ATP from ADP in the presence of a proton gradient across the membrane. This Prochlorococcus marinus (strain MIT 9312) protein is ATP synthase epsilon chain.